The sequence spans 309 residues: uncharacterized protein (309 aa).

It belongs to the OprB family.

This is an uncharacterized protein from Aquifex aeolicus (strain VF5).